Reading from the N-terminus, the 244-residue chain is Serine acetyltransferase (244 aa).

It belongs to the transferase hexapeptide repeat family.

It is found in the cytoplasm. It catalyses the reaction L-serine + acetyl-CoA = O-acetyl-L-serine + CoA. Its pathway is amino-acid biosynthesis; L-cysteine biosynthesis; L-cysteine from L-serine: step 1/2. This Synechococcus elongatus (strain ATCC 33912 / PCC 7942 / FACHB-805) (Anacystis nidulans R2) protein is Serine acetyltransferase (cysE).